Reading from the N-terminus, the 201-residue chain is Dephospho-CoA kinase (201 aa).

The DPCK domain maps to Met-2 to Gln-201. An ATP-binding site is contributed by Ala-10 to Ser-15.

It belongs to the CoaE family.

Its subcellular location is the cytoplasm. It catalyses the reaction 3'-dephospho-CoA + ATP = ADP + CoA + H(+). It functions in the pathway cofactor biosynthesis; coenzyme A biosynthesis; CoA from (R)-pantothenate: step 5/5. Its function is as follows. Catalyzes the phosphorylation of the 3'-hydroxyl group of dephosphocoenzyme A to form coenzyme A. The sequence is that of Dephospho-CoA kinase from Halalkalibacterium halodurans (strain ATCC BAA-125 / DSM 18197 / FERM 7344 / JCM 9153 / C-125) (Bacillus halodurans).